Here is a 182-residue protein sequence, read N- to C-terminus: uncharacterized protein (182 aa).

2 BNR repeats span residues 58-69 (WISFDAGENWET) and 102-113 (YITDDRGESWRA).

This is an uncharacterized protein from Saccharomyces cerevisiae (strain ATCC 204508 / S288c) (Baker's yeast).